Reading from the N-terminus, the 127-residue chain is Large ribosomal subunit protein bL12 (127 aa).

The protein belongs to the bacterial ribosomal protein bL12 family. In terms of assembly, homodimer. Part of the ribosomal stalk of the 50S ribosomal subunit. Forms a multimeric L10(L12)X complex, where L10 forms an elongated spine to which 2 to 4 L12 dimers bind in a sequential fashion. Binds GTP-bound translation factors.

Forms part of the ribosomal stalk which helps the ribosome interact with GTP-bound translation factors. Is thus essential for accurate translation. The protein is Large ribosomal subunit protein bL12 of Symbiobacterium thermophilum (strain DSM 24528 / JCM 14929 / IAM 14863 / T).